A 1300-amino-acid polypeptide reads, in one-letter code: MTEQQKLTFTALQQRLDSLMLRDRLRFSRRLHGVKKVKNPDAQQAIFQEMAKEIDQAAGKVLLREAARPEITYPDNLPVSQKKQDILEAIRDHQVVIVAGETGSGKTTQLPKICMELGRGIKGLIGHTQPRRLAARTVANRIAEELKTEPGGCIGYKVRFSDHVSDNTMVKLMTDGILLAEIQQDRLLMQYDTIIIDEAHERSLNIDFLLGYLKELLPRRPDLKIIITSATIDPERFSRHFNNAPIIEVSGRTYPVEVRYRPIVEEADDTERDQLQAIFDAVDELSQESHGDILIFMSGEREIRDTADALNKLNLRHTEILPLYARLSNSEQNRVFQSHSGRRIVLATNVAETSLTVPGIKYVIDPGTARISRYSYRTKVQRLPIEPISQASANQRKGRCGRVSEGICIRLYSEDDFLSRPEFTDPEILRTNLASVILQMTALGLGDIAAFPFVEAPDKRNIQDGVRLLEELGAITTDEQASAYKLTPLGRQLSQLPVDPRLARMVLEAQKHGCVREAMIITSALSIQDPRERPMDKQQASDEKHRRFHDKESDFLAFVNLWNYLGEQQKALSSNAFRRLCRTDYLNYLRVREWQDIYTQLRQVVKELGIPVNSEPAEYREIHIALLTGLLSHIGMKDADKQEYTGARNARFSIFPGSGLFKKPPKWVMVAELVETSRLWGRIAARIDPEWVEPVAQHLIKRTYSEPHWERAQGAVMATEKVTVYGLPIVAARKVNYSQIDPALCRELFIRHALVEGDWQTRHAFFRENLKLRAEVEELEHKSRRRDILVDDETLFEFYDQRISHDVISARHFDSWWKKVSRETPDLLNFEKSMLIKEGAEKISKLDYPNFWHQGNLKLRLSYQFEPGADADGVTVHIPLPLLNQVEESGFEWQIPGLRRELVIALIKSLPKPVRRNFVPAPNYAEAFLGRVKPLELPLLDSLERELRRMTGVTVDREDWHWDQVPDHLKITFRVVDDKNKKLKEGRSLQDLKDALKGKVQETLSAVADDGIEQSGLHIWSFGQLPESYEQKRGNYKVKAWPALVDERDSVAIKLFDNPLEQKQAMWNGLRRLLLLNIPSPIKYLHEKLPNKAKLGLYFNPYGKVLELIDDCISCGVDKLIDANGGPVWTEEGFAALHEKVRAELNDTVVDIAKQVEQILTAVFNINKRLKGRVDMTMALGLSDIKAQMGGLVYRGFVTGNGFKRLGDTLRYLQAIEKRLEKLAVDPHRDRAQMLKVENVQQAWQQWINKLPPARREDEDVKEIRWMIEELRVSYFAQQLGTPYPISDKRILQAMEQISG.

Residues 87-250 enclose the Helicase ATP-binding domain; it reads LEAIRDHQVV…FNNAPIIEVS (164 aa). 100 to 107 serves as a coordination point for ATP; sequence GETGSGKT. The DEAH box signature appears at 197-200; the sequence is DEAH. Residues 274 to 444 form the Helicase C-terminal domain; sequence QLQAIFDAVD…SVILQMTALG (171 aa).

This sequence belongs to the DEAD box helicase family. DEAH subfamily.

It carries out the reaction ATP + H2O = ADP + phosphate + H(+). Functionally, not yet known. The chain is ATP-dependent RNA helicase HrpA (hrpA) from Escherichia coli (strain K12).